Reading from the N-terminus, the 467-residue chain is Cytochrome c-552 (467 aa).

An N-terminal signal peptide occupies residues 1–27; that stretch reads MMKKMTGKSFALSALVAASFMAAGAMA. H87 contributes to the heme c binding site. Heme is bound by residues C115, C118, and K119. Heme c-binding residues include C153, C156, H157, C195, C198, and H199. Ca(2+) contacts are provided by E201, Y202, K250, and Q252. Y202 serves as a coordination point for substrate. H253 is a binding site for substrate. H264, C271, C274, H275, H290, C303, C306, H307, and H382 together coordinate heme c.

This sequence belongs to the cytochrome c-552 family. Ca(2+) serves as cofactor. It depends on heme c as a cofactor.

Its subcellular location is the periplasm. The catalysed reaction is 6 Fe(III)-[cytochrome c] + NH4(+) + 2 H2O = 6 Fe(II)-[cytochrome c] + nitrite + 8 H(+). Its pathway is nitrogen metabolism; nitrate reduction (assimilation). In terms of biological role, catalyzes the reduction of nitrite to ammonia, consuming six electrons in the process. The protein is Cytochrome c-552 of Shewanella sp. (strain MR-4).